The sequence spans 440 residues: Protein C-ets-1 (440 aa).

An N6-acetyllysine; alternate mark is found at Lys8 and Lys15. Residues Lys8 and Lys15 each participate in a glycyl lysine isopeptide (Lys-Gly) (interchain with G-Cter in SUMO2); alternate cross-link. Residue Lys15 forms a Glycyl lysine isopeptide (Lys-Gly) (interchain with G-Cter in SUMO); alternate linkage. A Phosphothreonine; by MAPK modification is found at Thr38. The PNT domain occupies 51 to 136 (ATFSGFTKEQ…EHLEILQKED (86 aa)). The tract at residues 130-243 (EILQKEDVKP…DNMCLGRASR (114 aa)) is activation domain; required for transcription activation. Lys138 is covalently cross-linked (Glycyl lysine isopeptide (Lys-Gly) (interchain with G-Cter in SUMO2)). Position 223 is a phosphotyrosine (Tyr223). Lys227 participates in a covalent cross-link: Glycyl lysine isopeptide (Lys-Gly) (interchain with G-Cter in SUMO). Ser251 is subject to Phosphoserine; by CaMK2. Ser254 is modified (phosphoserine). The residue at position 265 (Thr265) is a Phosphothreonine. Ser267 and Ser270 each carry phosphoserine. 2 positions are modified to phosphoserine; by CaMK2: Ser282 and Ser285. The segment at 304 to 312 (FKDYVRDRA) is helix HI-1. Lys305 carries the N6-acetyllysine modification. The segment at 323–330 (AAALAGYT) is helix HI-2. The segment at residues 335–415 (IQLWQFLLEL…AGKRYVYRFV (81 aa)) is a DNA-binding region (ETS). The tract at residues 418-422 (LQSLL) is helix H4. Residues 426–432 (PEELHAM) form a helix H5 region.

Belongs to the ETS family. As to quaternary structure, binds DNA as a homodimer; homodimerization is required for transcription activation. Interacts with MAF and MAFB. Interacts with PAX5; the interaction alters DNA-binding properties. Interacts with DAXX. Interacts with UBE2I. Interacts with SP100; the interaction is direct and modulates ETS1 transcriptional activity. Phosphorylation at Ser-251, Ser-282 and Ser-285 by CaMK2/CaMKII in response to calcium signaling decreases affinity for DNA: an increasing number of phosphoserines causes DNA-binding to become progressively weaker. Post-translationally, sumoylated on Lys-15 and Lys-227, preferentially with SUMO2; which inhibits transcriptional activity. In terms of processing, ubiquitinated; which induces proteasomal degradation.

It localises to the nucleus. Its subcellular location is the cytoplasm. Its activity is regulated as follows. Autoinhibited by a module composed of four alpha helices (HI-1, HI-2, H4, and H5) that flank the DNA-binding ETS domain, reducing the affinity for DNA. Phosphorylation by CaMK2/CaMKII in response to calcium signaling decreases affinity for DNA. Functionally, transcription factor. Directly controls the expression of cytokine and chemokine genes in a wide variety of different cellular contexts. May control the differentiation, survival and proliferation of lymphoid cells. May also regulate angiogenesis through regulation of expression of genes controlling endothelial cell migration and invasion. The polypeptide is Protein C-ets-1 (Ets1) (Mus musculus (Mouse)).